A 677-amino-acid chain; its full sequence is Protein hook (677 aa).

Residues Asn6–Ala123 form the Calponin-homology (CH) domain. 2 coiled-coil regions span residues Glu135 to His436 and Gln478 to Val588.

This sequence belongs to the hook family. As to quaternary structure, homodimer. Interacts with microtubules via its N-terminus.

It localises to the cytoplasm. The protein resides in the cytoskeleton. It is found in the endosome. Its subcellular location is the synapse. Functionally, involved in endocytic trafficking by stabilizing organelles of the endocytic pathway. Probably acts as a cytoskeletal linker protein required to tether endosome vesicles to the cytoskeleton. Involved in modulation of endocytosis at stages required for down-regulation of membrane proteins that control synapse size. Not involved in synaptic vesicle recycling. Required in R7 cells for boss endocytosis into multivesicular bodies (MVBs). Has a role in regulating adult longevity. The chain is Protein hook from Drosophila pseudoobscura pseudoobscura (Fruit fly).